The chain runs to 755 residues: Probable ubiquitin carboxyl-terminal hydrolase creB (755 aa).

Residues 1–32 are disordered; the sequence is MGSFLRSLRRDVGPPTPSVGATPAKKEPPVPP. The 414-residue stretch at 55 to 468 folds into the USP domain; that stretch reads FGMENYGNTC…CAYVLFYQET (414 aa). Cys-64 acts as the Nucleophile in catalysis. Disordered stretches follow at residues 119–146 and 237–270; these read EKQK…DSPE and EASK…TPNT. Positions 237–246 are enriched in basic and acidic residues; that stretch reads EASKQPEPER. Residues 254–270 show a composition bias toward polar residues; the sequence is ADSTELSGSSGSKTPNT. His-419 acts as the Proton acceptor in catalysis. Residues 495-755 form a disordered region; it reads TLKQNGYPLS…LKKKSFSILS (261 aa). Residues 547-560 show a composition bias toward low complexity; sequence ESSPADPSTTASAT. The span at 577–648 shows a compositional bias: basic and acidic residues; that stretch reads KKSDSHFKKE…RRHSPDDTKK (72 aa). Positions 581–630 form a coiled coil; the sequence is SHFKKERAKEEKERKANEKEKEKQRRRDQEARIREQRREDAEIRAALEAS. Basic residues predominate over residues 654 to 666; the sequence is SRLKRGSKSFSHR. The segment covering 693-709 has biased composition (polar residues); that stretch reads NGASESQQQLPNGQSPG. Residues 718–733 are compositionally biased toward basic and acidic residues; it reads TGLDEERDTLKDPKHD. The segment covering 734–755 has biased composition (basic residues); the sequence is RSGHHGKWRSFSLKKKSFSILS.

It belongs to the peptidase C19 family. In terms of assembly, interacts with creA, creC and qutD.

The enzyme catalyses Thiol-dependent hydrolysis of ester, thioester, amide, peptide and isopeptide bonds formed by the C-terminal Gly of ubiquitin (a 76-residue protein attached to proteins as an intracellular targeting signal).. Its function is as follows. Ubiquitin thioesterase component of the regulatory network controlling carbon source utilization through ubiquitination and deubiquitination involving creA, creB, creC, creD and acrB. Deubiquitinates the creA catabolic repressor and the quinate permease qutD. Also plays a role in response to carbon starvation and the control of extracellular proteases activity. The polypeptide is Probable ubiquitin carboxyl-terminal hydrolase creB (creB) (Aspergillus flavus (strain ATCC 200026 / FGSC A1120 / IAM 13836 / NRRL 3357 / JCM 12722 / SRRC 167)).